The primary structure comprises 105 residues: Immunoglobulin lambda-like polypeptide 1 (105 aa).

The interval 1-105 (QPKSDPLVTL…EKSVSPAECS (105 aa)) is c region. The region spanning 6 to 100 (PLVTLFLPSL…EGNTVEKSVS (95 aa)) is the Ig-like C1-type domain. A disulfide bridge links C27 with C86.

As to quaternary structure, associates non-covalently with VPREB1A. Interacts with SYNV1/HRD1 (via N-terminus); this interaction leads to increased IGLL1 ubiquitination and degradation in pre-B cells, possibly through a lysosomal, not proteasomal, pathway.

The protein localises to the endoplasmic reticulum. It is found in the secreted. In terms of biological role, critical for B-cell development. This is Immunoglobulin lambda-like polypeptide 1 (Igll1) from Mus spretus (Western Mediterranean mouse).